A 598-amino-acid polypeptide reads, in one-letter code: MTDLTTSDSTQPAWQTRDHLDDPVIGELSNRFGPEAFVVQATRTGMPVVWVKREQLLEVMTFLRKQPKPYVMLFDLHGVDERLRTHRQGLPAADFSVFYHLLSIERNRDIMLKVALSEKDLHVSTATKIFPNANWYERETWEMFGITFDGHPHLTRIMMPQTWEGHPLRKDYPARATEFDPFVLTKQKEDLEMESLTFKPEDWGMKRGTENEDFMFLNLGPNHPSSHGAFRIVLQLDGEEIVDCVPDVGYHHRGAEKMGERQSWHSYIPYTDRIEYLGGCVNEMPYVLAVEKLAGIEVPDRVKTIRVMLSELFRINSHLLYISTFIQDVGAMTPVFFAFTDRQKVYDLVEAITGFRMHPAWFRIGGVAHDLPRGWERLLRDFLDWMPKRLDSYVKAALQNSILKGRSIGVAAYNAKEALEWGVTGAGLRATGVEFDVRKWRPYSGYENFDFEVPVGNNGDCYDRVMLKVEELRQSLRILEQCYKNMPEGPFKADHPLTTPPPKERTLQHIETLITHFLQVSWGPVMPANESFQMVEATKGINSYYLTSDASTMSYRTRIRTPSYAHLQQIPSVIRGSLVSDLIVYLGSIDFVMSDVDR.

The tract at residues 1 to 189 (MTDLTTSDST…DPFVLTKQKE (189 aa)) is NADH dehydrogenase I subunit C. Positions 213–598 (DFMFLNLGPN…IDFVMSDVDR (386 aa)) are NADH dehydrogenase I subunit D.

It in the N-terminal section; belongs to the complex I 30 kDa subunit family. In the C-terminal section; belongs to the complex I 49 kDa subunit family. NDH-1 is composed of 13 different subunits. Subunits NuoB, CD, E, F, and G constitute the peripheral sector of the complex.

It localises to the cell inner membrane. The catalysed reaction is a quinone + NADH + 5 H(+)(in) = a quinol + NAD(+) + 4 H(+)(out). Its function is as follows. NDH-1 shuttles electrons from NADH, via FMN and iron-sulfur (Fe-S) centers, to quinones in the respiratory chain. The immediate electron acceptor for the enzyme in this species is believed to be ubiquinone. Couples the redox reaction to proton translocation (for every two electrons transferred, four hydrogen ions are translocated across the cytoplasmic membrane), and thus conserves the redox energy in a proton gradient. The chain is NADH-quinone oxidoreductase subunit C/D from Yersinia enterocolitica serotype O:8 / biotype 1B (strain NCTC 13174 / 8081).